Reading from the N-terminus, the 468-residue chain is Mannan endo-1,4-beta-mannosidase 3 (468 aa).

The first 23 residues, Met1 to Ala23, serve as a signal peptide directing secretion. Trp86 serves as a coordination point for substrate. N-linked (GlcNAc...) asparagine glycosylation is present at Asn152. Asn201 lines the substrate pocket. Glu202 acts as the Proton donor in catalysis. Position 281 (Tyr281) interacts with substrate. The N-linked (GlcNAc...) asparagine glycan is linked to Asn300. Glu321 (nucleophile) is an active-site residue. N-linked (GlcNAc...) asparagine glycosylation is present at Asn333. Substrate contacts are provided by Trp364 and Asp371. A disordered region spans residues Leu415 to Asp436. Residues Arg416 to Arg430 are compositionally biased toward basic residues.

The protein belongs to the glycosyl hydrolase 5 (cellulase A) family. As to expression, expressed in seeds.

The protein resides in the secreted. It catalyses the reaction Random hydrolysis of (1-&gt;4)-beta-D-mannosidic linkages in mannans, galactomannans and glucomannans.. The chain is Mannan endo-1,4-beta-mannosidase 3 (MAN3) from Oryza sativa subsp. japonica (Rice).